A 102-amino-acid chain; its full sequence is Putative sortase YwpE (102 aa).

Catalysis depends on histidine 17, which acts as the Proton donor/acceptor. The Acyl-thioester intermediate role is filled by cysteine 78.

Belongs to the bacterial sortase family.

Functionally, seems not to play a major role if any as a sortase. This Bacillus subtilis (strain 168) protein is Putative sortase YwpE (ywpE).